We begin with the raw amino-acid sequence, 87 residues long: Xibalbin-2 (87 aa).

An N-terminal signal peptide occupies residues 1–25 (MKGVCTRKVLYFFMAVILFVAIVAS). The propeptide occupies 26–45 (EDTENRNPAMAMPLQRMEQE).

It belongs to the xibalbin-2 family. Post-translationally, contains 5 disulfide bonds. As to expression, expressed by the venom gland. Not found in the whole body.

It is found in the secreted. In terms of biological role, probable neurotoxin. Moderately inhibits voltage-gated potassium channels (Kv1.1/KCNA1, Kv1.2/KCNA2, Kv1.3/KCNA3, and Kv1.6/KCNA6, with the highest toxicity against Kv1.6 (73.2% inhibition at 1 uM)) and weakly inhibits sodium channels (Nav1.4/SCN4A). Does not activate protein kinase A type II (PKA-II) and MAP kinase Erk1/2 in sensory neurons. Does not show cytotoxic activity. Does not have an impact on Ca2+, cAMP, and NO signaling in the cell types analyzed. Does not interfere with the adhesion of leukocytes to endothelial cells. Functionally, moderately inhibits voltage-gated potassium channels (Kv1.1/KCNA1, Kv1.2/KCNA2, Kv1.3/KCNA3, and Kv1.6/KCNA6, with the highest toxicity against Kv1.6 (75.9% inhibition at 1 uM)). Does not activate protein kinase A type II (PKA-II) and MAP kinase Erk1/2 in sensory neurons. Does not show cytotoxic activity. Does not have an impact on Ca2+, cAMP, and NO signaling in the cell types analyzed. Does not interfere with the adhesion of leukocytes to endothelial cells. In Xibalbanus tulumensis (Blind cave remipede), this protein is Xibalbin-2.